A 348-amino-acid polypeptide reads, in one-letter code: ATPase GET3 (348 aa).

Residue 26–33 (KGGVGKTT) participates in ATP binding. Asp-57 is an active-site residue. Positions 241 and 268 each coordinate ATP. Zn(2+) contacts are provided by Cys-280 and Cys-283. 310–312 (PLL) is a binding site for ATP.

The protein belongs to the arsA ATPase family. In terms of assembly, homodimer. Component of the Golgi to ER traffic (GET) complex, which is composed of GET1, GET2 and GET3. Within the complex, GET1 and GET2 form a heterotetramer which is stabilized by phosphatidylinositol binding and which binds to the GET3 homodimer. Interacts with the chloride channel protein GEF1.

The protein resides in the cytoplasm. It is found in the endoplasmic reticulum. It localises to the golgi apparatus. Its function is as follows. ATPase required for the post-translational delivery of tail-anchored (TA) proteins to the endoplasmic reticulum. Recognizes and selectively binds the transmembrane domain of TA proteins in the cytosol. This complex then targets to the endoplasmic reticulum by membrane-bound receptors GET1 and GET2, where the tail-anchored protein is released for insertion. This process is regulated by ATP binding and hydrolysis. ATP binding drives the homodimer towards the closed dimer state, facilitating recognition of newly synthesized TA membrane proteins. ATP hydrolysis is required for insertion. Subsequently, the homodimer reverts towards the open dimer state, lowering its affinity for the GET1-GET2 receptor, and returning it to the cytosol to initiate a new round of targeting. Cooperates with the HDEL receptor ERD2 to mediate the ATP-dependent retrieval of resident ER proteins that contain a C-terminal H-D-E-L retention signal from the Golgi to the ER. Involved in low-level resistance to the oxyanions arsenite and arsenate, and in heat tolerance. The polypeptide is ATPase GET3 (Debaryomyces hansenii (strain ATCC 36239 / CBS 767 / BCRC 21394 / JCM 1990 / NBRC 0083 / IGC 2968) (Yeast)).